Consider the following 210-residue polypeptide: Neurotrophin-4 (210 aa).

The N-terminal stretch at 1 to 24 (MLPLPSCSLPILLLFLLPSVPIES) is a signal peptide. The propeptide occupies 25-80 (QPPPSTLPPFLAPEWDLLSPRVVLSRGAPAGPPLLFLLEAGAFRESAGAPANRSRR). A glycan (N-linked (GlcNAc...) asparagine) is linked at Asn-76. Intrachain disulfides connect Cys-97–Cys-170, Cys-141–Cys-199, and Cys-158–Cys-201.

It belongs to the NGF-beta family. As to expression, highest levels in prostate, lower levels in thymus, placenta, and skeletal muscle. Expressed in embryonic and adult tissues.

Its subcellular location is the secreted. Target-derived survival factor for peripheral sensory sympathetic neurons. May promote ameloblast differentiation and subsequent reduction in proliferation of ameloblasts. This is Neurotrophin-4 (NTF4) from Homo sapiens (Human).